The sequence spans 314 residues: tRNA pseudouridine synthase B (314 aa).

Histidine 43 lines the substrate pocket. Residue aspartate 48 is the Nucleophile of the active site. Substrate contacts are provided by tyrosine 76, tyrosine 179, and leucine 200.

Belongs to the pseudouridine synthase TruB family. Type 1 subfamily.

The catalysed reaction is uridine(55) in tRNA = pseudouridine(55) in tRNA. Its function is as follows. Responsible for synthesis of pseudouridine from uracil-55 in the psi GC loop of transfer RNAs. The polypeptide is tRNA pseudouridine synthase B (Shigella flexneri).